A 1235-amino-acid chain; its full sequence is Cullin-associated NEDD8-dissociated protein 2 (1235 aa).

Serine 2 is subject to N-acetylserine. HEAT repeat units lie at residues 2 to 39 (STGAFYISSLLEKMTSSDKDFRFMATSDLMSELQKDSI), 44 to 81 (DSERKVVRTLLRLLEDRSGEVQNLAVKCLGPLVGKVKE), 83 to 119 (QVENIVDTLCANMRSDKEQLRDIAGIGLKTVLSELPP), 129 to 167 (NVCRKITGQLTSAIAQQEDVAVQLEALDILSDMLSRLGA), 171 to 208 (TFHASLLHCLLPQLSSPRLAVRKRTVVALGHLAAACST), 210 to 246 (LFVELADHLVDRLPGPRAPASPAAIRTLIQCLGSVGR), 254 to 291 (AHLDRLVPMVEEFCNLDDDELRESCLQAFEAFLRKCPK), 326 to 367 (TEDS…SRPD), 371 to 408 (DFHCTLAPALIRRFKEREENVKADIFGAYIMLLRHTRP), 431 to 468 (AQVPLVIKALQRQLKDRNVRTRQGCFNLFTELAGVLPG), 516 to 553 (PHLPTLLPPVMACVADPFYKVAAEALLVLQELVRTLWP), 564 to 603 (PYVGEMSTATLARLRATDLDQEVKERAISCVGHLVGHLGD), 607 to 644 (DDLEPTLMLLLDRLRNEITRLPAVKALTLVAMSPLRLD), 647 to 684 (PILAEALPILASFLRKNQRALRLATLAALDALAQSQGL), 689 to 726 (PAVRTVLTELPALVSENDMHVAQLAVDFLTTVTQTQPS), 730 to 769 (EVSGPVLGELLQLLHSPLLPAGVLAATEGFLQALVGTRPP), 771 to 812 (VEYS…ALSA), 856 to 893 (GPQRELKTVLLEALGSPSEDVRAAAAYALGRVGAGNLP), 895 to 930 (FLPFLLAQIEAQPRRQYLLLHALREALGAAQPDNLK), 932 to 965 (YVEDVWALLFQRCESPEEGTRCVVAECIGKLVFV), 966 to 1002 (NPPYLLPRFRKQLAAGQPYTRSTVITAVKFLISDQPH), 1006 to 1043 (PLLKSFIAEFMESLQDPDLNVRRATLTFFNSAVHNKPS), 1047 to 1083 (DLLDDILPLLYQETKIRRDLIREVEMGPFKHTVDDGL), 1104 to 1140 (LDMCEFLNHVEDGLKDHYDIRMLTFIMLARLATLCPA), 1156 to 1193 (TCTAKVKAGSVKQELEKQEELKRSAMRAVAALLTNPEV), and 1203 to 1235 (SAQIRSNPELTTLFESIQKDTASGPSTDSMELS). A disordered region spans residues 314-345 (YDHDSDDEEQMETEDSEFSEQESEDEYSDDDD). The span at 317–345 (DSDDEEQMETEDSEFSEQESEDEYSDDDD) shows a compositional bias: acidic residues.

Belongs to the CAND family. As to quaternary structure, binds TBP, CNOT3 and UBE3C. In terms of processing, ubiquitinated and targeted for proteasomal degradation. As to expression, highly expressed in embryonic limb buds.

The protein localises to the nucleus. Functionally, probable assembly factor of SCF (SKP1-CUL1-F-box protein) E3 ubiquitin ligase complexes that promotes the exchange of the substrate-recognition F-box subunit in SCF complexes, thereby playing a key role in the cellular repertoire of SCF complexes. In Mus musculus (Mouse), this protein is Cullin-associated NEDD8-dissociated protein 2 (Cand2).